We begin with the raw amino-acid sequence, 84 residues long: Small ribosomal subunit protein uS17c (84 aa).

The protein belongs to the universal ribosomal protein uS17 family. Part of the 30S ribosomal subunit.

It localises to the plastid. It is found in the chloroplast. One of the primary rRNA binding proteins, it binds specifically to the 5'-end of 16S ribosomal RNA. The polypeptide is Small ribosomal subunit protein uS17c (rps17) (Trieres chinensis (Marine centric diatom)).